The sequence spans 96 residues: UPF0235 protein VC0395_A0010/VC395_0502 (96 aa).

Belongs to the UPF0235 family.

This chain is UPF0235 protein VC0395_A0010/VC395_0502, found in Vibrio cholerae serotype O1 (strain ATCC 39541 / Classical Ogawa 395 / O395).